The sequence spans 538 residues: Protein PNS1 (538 aa).

Residues 1–54 are compositionally biased toward low complexity; sequence MGESDAYYNGGQQQQYNGGYQQQYQPQPPAASYQAPPQQPYQQQPYQQGPPQNG. The segment at 1 to 67 is disordered; it reads MGESDAYYNG…GNGYMPAQGY (67 aa). Residues 1 to 88 are Cytoplasmic-facing; that stretch reads MGESDAYYNG…FKIAKPKYND (88 aa). Residues 89-109 traverse the membrane as a helical segment; the sequence is LWAGILLILVFAGFVVVSGLA. The Extracellular segment spans residues 110-137; it reads LQGYSANKGNAGDGIYNNKNDFSPNTST. Residue asparagine 134 is glycosylated (N-linked (GlcNAc...) asparagine). The helical transmembrane segment at 138-158 threads the bilayer; sequence VILFMFVLAVAFVLSYAYVWM. At 159–165 the chain is on the cytoplasmic side; that stretch reads ARLFPKQ. Residues 166-186 form a helical membrane-spanning segment; sequence FIWVTGILNVCWAIGTAIFYL. Residues 187–191 are Extracellular-facing; the sequence is WRKYW. A helical membrane pass occupies residues 192–212; it reads SAGIVFLIFGLFMAFCFWTWI. Residues 213-239 lie on the Cytoplasmic side of the membrane; the sequence is SRIPFSALMLKTTIDVSKKYGHVYLVS. A helical membrane pass occupies residues 240-260; sequence LIGGIIATAFSAWYAITLVGI. The Extracellular segment spans residues 261-280; that stretch reads YVKYQPAQDNPSCADGGCGK. A helical transmembrane segment spans residues 281–301; the sequence is GKVIGLIAFITFAMYWFSEWL. The Cytoplasmic portion of the chain corresponds to 302–335; sequence KNTIHTTIAGVYGSWYFNPHNFPKDATRASAKRA. The helical transmembrane segment at 336-356 threads the bilayer; that stretch reads LTYSFGSIALGSLLVAIIQFL. The Extracellular portion of the chain corresponds to 357–372; sequence RQICNAARNQEGADGS. A helical membrane pass occupies residues 373-393; sequence FVGYAIFCCISCLLGLLEWAV. The Cytoplasmic segment spans residues 394–434; it reads EFINRYAFCHIALYGKAYFAAAKDTWKMIKDRGIDALINDC. Residues 435 to 455 form a helical membrane-spanning segment; that stretch reads LIGPVLSFGALFIAYACALLA. At 456-474 the chain is on the extracellular side; it reads YLYLYFTDPAYNSDGQYTA. Residues 475–495 traverse the membrane as a helical segment; it reads VVMAFSFLIGFQIANVFTTPI. Over 496-538 the chain is Cytoplasmic; it reads SSGIETIFVAAGWDPQVMWRDHPELYNEMVRVYPKVQQVIKDR.

It belongs to the CTL (choline transporter-like) family.

The protein localises to the cell membrane. Its function is as follows. Probably involved in transport through the plasma membrane. This is Protein PNS1 (PNS1) from Gibberella zeae (strain ATCC MYA-4620 / CBS 123657 / FGSC 9075 / NRRL 31084 / PH-1) (Wheat head blight fungus).